Here is a 331-residue protein sequence, read N- to C-terminus: DNA-directed RNA polymerase subunit alpha (331 aa).

The alpha N-terminal domain (alpha-NTD) stretch occupies residues Met-1–Glu-233. An alpha C-terminal domain (alpha-CTD) region spans residues Lys-265 to Asp-331.

It belongs to the RNA polymerase alpha chain family. In terms of assembly, in plastids the minimal PEP RNA polymerase catalytic core is composed of four subunits: alpha, beta, beta', and beta''. When a (nuclear-encoded) sigma factor is associated with the core the holoenzyme is formed, which can initiate transcription.

It localises to the plastid. It is found in the chloroplast. It carries out the reaction RNA(n) + a ribonucleoside 5'-triphosphate = RNA(n+1) + diphosphate. DNA-dependent RNA polymerase catalyzes the transcription of DNA into RNA using the four ribonucleoside triphosphates as substrates. The sequence is that of DNA-directed RNA polymerase subunit alpha from Vitis vinifera (Grape).